Reading from the N-terminus, the 92-residue chain is Small ribosomal subunit protein uS19 (92 aa).

A disordered region spans residues Glu73 to Lys92. The span at Phe80–Lys92 shows a compositional bias: basic residues.

The protein belongs to the universal ribosomal protein uS19 family.

Functionally, protein S19 forms a complex with S13 that binds strongly to the 16S ribosomal RNA. In Flavobacterium psychrophilum (strain ATCC 49511 / DSM 21280 / CIP 103535 / JIP02/86), this protein is Small ribosomal subunit protein uS19.